Reading from the N-terminus, the 984-residue chain is Putative formate dehydrogenase SAR2393 (984 aa).

The region spanning 3 to 79 (EHLVVTLDGK…PMTVNTVNND (77 aa)) is the 2Fe-2S ferredoxin-type domain. [2Fe-2S] cluster-binding residues include Cys37, Cys48, Cys51, and Cys63. Residues 79 to 119 (DVKDAQKEALDRILEKHMLYCTVCDYNNGDCEIHNTMDAWG) form the 4Fe-4S His(Cys)3-ligated-type domain. [4Fe-4S] cluster contacts are provided by His95, Cys99, Cys102, Cys109, Cys147, Cys150, Cys153, Cys157, Cys190, Cys193, Cys196, Cys200, Cys264, Cys267, Cys271, and Cys299. 4Fe-4S ferredoxin-type domains lie at 138–165 (PFYR…LNET) and 181–211 (NDVP…VNME). Positions 252-984 (MRKERIKKTK…YVFPGNQVDK (733 aa)) are formate dehydrogenase. The region spanning 257–313 (IKKTKTVCTYCGVGCSFEVWTKDREILKVQPSHDSPANKIATCVKGKFSWGHINSDQ) is the 4Fe-4S Mo/W bis-MGD-type domain.

In the C-terminal section; belongs to the prokaryotic molybdopterin-containing oxidoreductase family. It depends on [2Fe-2S] cluster as a cofactor. [4Fe-4S] cluster is required as a cofactor. Requires Mo-bis(molybdopterin guanine dinucleotide) as cofactor.

It catalyses the reaction formate + NAD(+) = CO2 + NADH. The protein is Putative formate dehydrogenase SAR2393 of Staphylococcus aureus (strain MRSA252).